Reading from the N-terminus, the 176-residue chain is Xanthine-guanine phosphoribosyltransferase (176 aa).

Residues 51-52 and 110-118 each bind 5-phospho-alpha-D-ribose 1-diphosphate; these read RG and DDLVDTGKT. Residue Asp111 participates in Mg(2+) binding. Guanine-binding residues include Asp114 and Ile157. The xanthine site is built by Asp114 and Ile157. Residues 114–118 and 156–157 contribute to the GMP site; these read DTGKT and WI.

It belongs to the purine/pyrimidine phosphoribosyltransferase family. XGPT subfamily. In terms of assembly, homotetramer. It depends on Mg(2+) as a cofactor.

It localises to the cell inner membrane. It catalyses the reaction GMP + diphosphate = guanine + 5-phospho-alpha-D-ribose 1-diphosphate. The enzyme catalyses XMP + diphosphate = xanthine + 5-phospho-alpha-D-ribose 1-diphosphate. The catalysed reaction is IMP + diphosphate = hypoxanthine + 5-phospho-alpha-D-ribose 1-diphosphate. The protein operates within purine metabolism; GMP biosynthesis via salvage pathway; GMP from guanine: step 1/1. It participates in purine metabolism; XMP biosynthesis via salvage pathway; XMP from xanthine: step 1/1. In terms of biological role, purine salvage pathway enzyme that catalyzes the transfer of the ribosyl-5-phosphate group from 5-phospho-alpha-D-ribose 1-diphosphate (PRPP) to the N9 position of the 6-oxopurines guanine and xanthine to form the corresponding ribonucleotides GMP (guanosine 5'-monophosphate) and XMP (xanthosine 5'-monophosphate), with the release of PPi. To a lesser extent, also acts on hypoxanthine. The polypeptide is Xanthine-guanine phosphoribosyltransferase (Bradyrhizobium diazoefficiens (strain JCM 10833 / BCRC 13528 / IAM 13628 / NBRC 14792 / USDA 110)).